The following is a 188-amino-acid chain: Elongation factor P (188 aa).

Belongs to the elongation factor P family.

It localises to the cytoplasm. Its pathway is protein biosynthesis; polypeptide chain elongation. In terms of biological role, involved in peptide bond synthesis. Stimulates efficient translation and peptide-bond synthesis on native or reconstituted 70S ribosomes in vitro. Probably functions indirectly by altering the affinity of the ribosome for aminoacyl-tRNA, thus increasing their reactivity as acceptors for peptidyl transferase. This chain is Elongation factor P, found in Rickettsia canadensis (strain McKiel).